The sequence spans 201 residues: Orotate phosphoribosyltransferase (201 aa).

Residue 113 to 121 (EDIITTGKS) coordinates 5-phospho-alpha-D-ribose 1-diphosphate. T117 and R145 together coordinate orotate.

The protein belongs to the purine/pyrimidine phosphoribosyltransferase family. PyrE subfamily. As to quaternary structure, homodimer. The cofactor is Mg(2+).

It catalyses the reaction orotidine 5'-phosphate + diphosphate = orotate + 5-phospho-alpha-D-ribose 1-diphosphate. The protein operates within pyrimidine metabolism; UMP biosynthesis via de novo pathway; UMP from orotate: step 1/2. Functionally, catalyzes the transfer of a ribosyl phosphate group from 5-phosphoribose 1-diphosphate to orotate, leading to the formation of orotidine monophosphate (OMP). This Helicobacter pylori (strain HPAG1) protein is Orotate phosphoribosyltransferase.